The chain runs to 434 residues: Glutamyl-tRNA reductase (434 aa).

Substrate is bound by residues 52–55, Ser-115, 120–122, and Gln-126; these read TCNR and ETQ. Catalysis depends on Cys-53, which acts as the Nucleophile. Residue 195–200 coordinates NADP(+); it reads GAGEMI.

The protein belongs to the glutamyl-tRNA reductase family. Homodimer.

It catalyses the reaction (S)-4-amino-5-oxopentanoate + tRNA(Glu) + NADP(+) = L-glutamyl-tRNA(Glu) + NADPH + H(+). It functions in the pathway porphyrin-containing compound metabolism; protoporphyrin-IX biosynthesis; 5-aminolevulinate from L-glutamyl-tRNA(Glu): step 1/2. Catalyzes the NADPH-dependent reduction of glutamyl-tRNA(Glu) to glutamate 1-semialdehyde (GSA). The chain is Glutamyl-tRNA reductase from Cupriavidus pinatubonensis (strain JMP 134 / LMG 1197) (Cupriavidus necator (strain JMP 134)).